The primary structure comprises 432 residues: Trigger factor (432 aa).

A PPIase FKBP-type domain is found at 161 to 246 (EDRVTIDFTG…LKKVEERELP (86 aa)).

It belongs to the FKBP-type PPIase family. Tig subfamily.

The protein resides in the cytoplasm. The enzyme catalyses [protein]-peptidylproline (omega=180) = [protein]-peptidylproline (omega=0). Functionally, involved in protein export. Acts as a chaperone by maintaining the newly synthesized protein in an open conformation. Functions as a peptidyl-prolyl cis-trans isomerase. The polypeptide is Trigger factor (Salmonella schwarzengrund (strain CVM19633)).